Consider the following 44-residue polypeptide: MKSLKIRFRRFLLEKLSFYFKLIKTFLEFISLLINSFAMGDLKY.

The protein resides in the plastid. Its subcellular location is the chloroplast. This is an uncharacterized protein from Trieres chinensis (Marine centric diatom).